The sequence spans 142 residues: Nucleoside diphosphate kinase (142 aa).

Residues Lys-9, Phe-57, Arg-85, Thr-91, Arg-102, and Asn-112 each coordinate ATP. Catalysis depends on His-115, which acts as the Pros-phosphohistidine intermediate.

This sequence belongs to the NDK family. As to quaternary structure, homotetramer. Mg(2+) is required as a cofactor.

The protein resides in the cytoplasm. The catalysed reaction is a 2'-deoxyribonucleoside 5'-diphosphate + ATP = a 2'-deoxyribonucleoside 5'-triphosphate + ADP. It carries out the reaction a ribonucleoside 5'-diphosphate + ATP = a ribonucleoside 5'-triphosphate + ADP. Its function is as follows. Major role in the synthesis of nucleoside triphosphates other than ATP. The ATP gamma phosphate is transferred to the NDP beta phosphate via a ping-pong mechanism, using a phosphorylated active-site intermediate. The protein is Nucleoside diphosphate kinase of Dehalococcoides mccartyi (strain CBDB1).